A 249-amino-acid chain; its full sequence is Homeobox-leucine zipper protein HOX6 (249 aa).

The disordered stretch occupies residues Met-1–Lys-32. The segment covering Gly-15 to Ala-27 has biased composition (gly residues). Residues Ala-27–Gln-86 constitute a DNA-binding region (homeobox). The leucine-zipper stretch occupies residues Lys-85–Pro-129. Residues Phe-194 to Glu-249 form a disordered region. Over residues Phe-212–Pro-242 the composition is skewed to polar residues.

The protein belongs to the HD-ZIP homeobox family. Class I subfamily. In terms of tissue distribution, expressed in seedlings, roots, leaves, nodes, internodes, flowers and embryo.

The protein localises to the nucleus. In terms of biological role, probable transcription factor that binds to the DNA sequence 5'-CAAT[AT]ATTG-3'. This Oryza sativa subsp. indica (Rice) protein is Homeobox-leucine zipper protein HOX6 (HOX6).